Consider the following 313-residue polypeptide: Porphobilinogen deaminase (313 aa).

C242 carries the post-translational modification S-(dipyrrolylmethanemethyl)cysteine.

Belongs to the HMBS family. In terms of assembly, monomer. Dipyrromethane is required as a cofactor.

It carries out the reaction 4 porphobilinogen + H2O = hydroxymethylbilane + 4 NH4(+). The protein operates within porphyrin-containing compound metabolism; protoporphyrin-IX biosynthesis; coproporphyrinogen-III from 5-aminolevulinate: step 2/4. Tetrapolymerization of the monopyrrole PBG into the hydroxymethylbilane pre-uroporphyrinogen in several discrete steps. This Proteus mirabilis protein is Porphobilinogen deaminase (hemC).